A 276-amino-acid chain; its full sequence is uncharacterized protein (276 aa).

An AB hydrolase-1 domain is found at 20 to 137; sequence PVLIFIPGAN…PPINTFLPDS (118 aa). The segment at 57-76 is disordered; that stretch reads GESELTEPLPDSASNPDSDY.

The protein belongs to the AB hydrolase superfamily.

This is an uncharacterized protein from Staphylococcus aureus (strain MW2).